Here is a 477-residue protein sequence, read N- to C-terminus: Bifunctional protein HldE (477 aa).

Residues 1 to 318 (MKVTLPEFER…ENAVRGRADT (318 aa)) form a ribokinase region. Lys-179 is subject to N6-acetyllysine. 195–198 (NLSE) provides a ligand contact to ATP. Asp-264 is a catalytic residue. Positions 344-477 (MTNGVFDILH…IKKIQQDKKG (134 aa)) are cytidylyltransferase.

This sequence in the N-terminal section; belongs to the carbohydrate kinase PfkB family. It in the C-terminal section; belongs to the cytidylyltransferase family. As to quaternary structure, homodimer.

It catalyses the reaction D-glycero-beta-D-manno-heptose 7-phosphate + ATP = D-glycero-beta-D-manno-heptose 1,7-bisphosphate + ADP + H(+). The enzyme catalyses D-glycero-beta-D-manno-heptose 1-phosphate + ATP + H(+) = ADP-D-glycero-beta-D-manno-heptose + diphosphate. Its pathway is nucleotide-sugar biosynthesis; ADP-L-glycero-beta-D-manno-heptose biosynthesis; ADP-L-glycero-beta-D-manno-heptose from D-glycero-beta-D-manno-heptose 7-phosphate: step 1/4. It participates in nucleotide-sugar biosynthesis; ADP-L-glycero-beta-D-manno-heptose biosynthesis; ADP-L-glycero-beta-D-manno-heptose from D-glycero-beta-D-manno-heptose 7-phosphate: step 3/4. In terms of biological role, catalyzes the phosphorylation of D-glycero-D-manno-heptose 7-phosphate at the C-1 position to selectively form D-glycero-beta-D-manno-heptose-1,7-bisphosphate. Catalyzes the ADP transfer from ATP to D-glycero-beta-D-manno-heptose 1-phosphate, yielding ADP-D-glycero-beta-D-manno-heptose. This Escherichia coli O9:H4 (strain HS) protein is Bifunctional protein HldE.